The primary structure comprises 244 residues: MFLTRSEYDRGVNTFSPEGRLFQVEYAIEAIKLGSTAIGICTPEGVVLAVEKRITSPLMVPSTVEKIVEVDKHIGCATSGLMADARTLIERARVECQNHWFVYNERMSIESCAQAVSTLAIQFGDSGDSDGAAAMSRPFGVAILFAGIEAGQPQLWHMDPSGTFVRHGAKAIGSGSEGAQQNLQDLFRPDLTLDEAIDISLNTLKQVMEEKLNSTNVEVMTMTKEREFYMFTKEEVEQHIKNIA.

It belongs to the peptidase T1A family. In terms of assembly, the 26S proteasome consists of a 20S proteasome core and two 19S regulatory subunits. The 20S proteasome core is composed of 28 subunits that are arranged in four stacked rings, resulting in a barrel-shaped structure. The two end rings are each formed by seven alpha subunits, and the two central rings are each formed by seven beta subunits. The catalytic chamber with the active sites is on the inside of the barrel.

Its subcellular location is the cytoplasm. It localises to the nucleus. The proteasome is a multicatalytic proteinase complex which is characterized by its ability to cleave peptides with Arg, Phe, Tyr, Leu, and Glu adjacent to the leaving group at neutral or slightly basic pH. The proteasome has an ATP-dependent proteolytic activity. The chain is Proteasome subunit alpha type-5 (Prosalpha5) from Drosophila melanogaster (Fruit fly).